A 390-amino-acid chain; its full sequence is 8-amino-7-oxononanoate synthase (390 aa).

Residue Arg-19 participates in substrate binding. 106 to 107 (GY) provides a ligand contact to pyridoxal 5'-phosphate. Residue His-131 participates in substrate binding. Residues Ser-176, His-204, and Thr-233 each contribute to the pyridoxal 5'-phosphate site. Lys-236 carries the N6-(pyridoxal phosphate)lysine modification. Thr-350 provides a ligand contact to substrate.

This sequence belongs to the class-II pyridoxal-phosphate-dependent aminotransferase family. BioF subfamily. Homodimer. Pyridoxal 5'-phosphate is required as a cofactor.

The enzyme catalyses 6-carboxyhexanoyl-[ACP] + L-alanine + H(+) = (8S)-8-amino-7-oxononanoate + holo-[ACP] + CO2. The protein operates within cofactor biosynthesis; biotin biosynthesis. Functionally, catalyzes the decarboxylative condensation of pimeloyl-[acyl-carrier protein] and L-alanine to produce 8-amino-7-oxononanoate (AON), [acyl-carrier protein], and carbon dioxide. This Pseudomonas putida (strain GB-1) protein is 8-amino-7-oxononanoate synthase.